Reading from the N-terminus, the 73-residue chain is MNKKTLLVIFFITMLIVDEVNSFKIGGFIKKLWRSKLAKKLRAKGRELLKDYANRVINGGPEEEAAVPAERRR.

Residues 1–22 (MNKKTLLVIFFITMLIVDEVNS) form the signal peptide.

The protein belongs to the non-disulfide-bridged peptide (NDBP) superfamily. Long chain multifunctional peptide (group 2) family. Expressed by the venom gland.

The protein localises to the secreted. Its subcellular location is the target cell membrane. Its function is as follows. Amphipathic peptide that displays potent antimicrobial activities against a range of Gram-positive and Gram-negative planktonic bacteria with MIC values in the range 5 uM to 10 uM. In more details, it is active on Listeria ivanovii (MIC=5 uM), Staphylococcus epidermidis (MIC=10 uM), Salmonella enterica (MIC=5 uM), Pseudomonas aeruginosa (ATCC 27853) (MIC=5 uM), Acinetobacter baumannii (MIC=5 uM), Klebsiella pneumoniae (MIC=5 uM), Escherichia coli (MIC=7.5 uM), Salmonella typhimurium (MIC=7.5 uM), Pseudomonas aeruginosa (ATCC 9027) (MIC=10 uM). Is also able to prevent P.aeruginosa biofilm formation while showing weak hemolytic activity towards human erythrocytes. Probably induces bacterial cell death through membrane permeabilization. Moreover, shows DNA-binding activities. Also exerts potent selective cytotoxic and antiproliferative activity against three different prostate cancer cell lines (IC(50)=4.4-7.8 uM), compared to non-tumorigenic cell lines (IC(50)=59.7 uM in Vero and 62.5 uM in HUVEC cells). This peptide possibly exerts its cytotoxic activity through a necrotic mode of cell death. Only shows diminished hemolytic activity against sheep erythrocytes. Does not induce cell death through apoptosis and consequently is not acting upon an intracellular target. This is Mauriporin from Androctonus mauritanicus (Fat-tailed scorpion).